The primary structure comprises 67 residues: Prokaryotic ubiquitin-like protein Pup (67 aa).

Residues 1 to 13 (MAGQEQQQPQSRD) show a composition bias toward low complexity. The interval 1–48 (MAGQEQQQPQSRDSQVDEDIPEAPPAPPEAQASASTEGVDDLLDEIDG) is disordered. Residues 25–61 (PAPPEAQASASTEGVDDLLDEIDGVLESNAEEFVRAF) are ARC ATPase binding. The segment covering 38-48 (GVDDLLDEIDG) has biased composition (acidic residues). Deamidated glutamine is present on Gln-67. Gln-67 is covalently cross-linked (Isoglutamyl lysine isopeptide (Gln-Lys) (interchain with K-? in acceptor proteins)).

It belongs to the prokaryotic ubiquitin-like protein family. As to quaternary structure, strongly interacts with the proteasome-associated ATPase ARC through a hydrophobic interface; the interacting region of Pup lies in its C-terminal half. There is one Pup binding site per ARC hexamer ring. Is modified by deamidation of its C-terminal glutamine to glutamate by the deamidase Dop, a prerequisite to the subsequent pupylation process.

Its pathway is protein degradation; proteasomal Pup-dependent pathway. Protein modifier that is covalently attached to lysine residues of substrate proteins, thereby targeting them for proteasomal degradation. The tagging system is termed pupylation. The sequence is that of Prokaryotic ubiquitin-like protein Pup from Pseudarthrobacter chlorophenolicus (strain ATCC 700700 / DSM 12829 / CIP 107037 / JCM 12360 / KCTC 9906 / NCIMB 13794 / A6) (Arthrobacter chlorophenolicus).